The chain runs to 554 residues: Protein PNS1 (554 aa).

2 stretches are compositionally biased toward low complexity: residues 1–19 and 27–45; these read MSGP…NNNN and SYQM…QPQY. A disordered region spans residues 1–90; sequence MSGPQYGAQP…TDGYGGPPPS (90 aa). Residues 1–105 lie on the Cytoplasmic side of the membrane; it reads MSGPQYGAQP…KVQKPKYNDW (105 aa). A compositionally biased stretch (pro residues) spans 68–90; the sequence is PQGPPPNGSKPPPTDGYGGPPPS. A helical membrane pass occupies residues 106–126; that stretch reads WAGLLFLATVAGFVAVSAISI. The Extracellular portion of the chain corresponds to 127–153; that stretch reads HGYADNRSQNNGSLNGQRNTFGLTTHT. N-linked (GlcNAc...) asparagine glycosylation is found at Asn132 and Asn137. A helical membrane pass occupies residues 154–174; sequence IYLFVWVLICAIVLSYAYMWM. The Cytoplasmic segment spans residues 175 to 181; that stretch reads ARKFTKQ. Residues 182 to 202 traverse the membrane as a helical segment; it reads FIYATGILNIVMGLVTALYML. Residues 203–206 lie on the Extracellular side of the membrane; it reads SRKY. Residues 207–227 form a helical membrane-spanning segment; it reads WSGGIVFLIFVVLQALFFWSC. Residues 228–255 lie on the Cytoplasmic side of the membrane; it reads RSRIPFSTLMLQTAIDVSKVHGHVYLVS. The helical transmembrane segment at 256–276 threads the bilayer; sequence AVGGVIGTLFAAYWAITLVAV. At 277-297 the chain is on the extracellular side; the sequence is YVKFEPDPNNAACRNAGGCSS. The helical transmembrane segment at 298-318 threads the bilayer; that stretch reads GKVIGLIVFITFAGYWISEWL. At 319-352 the chain is on the cytoplasmic side; that stretch reads KNTIHTTVAGIYGSWYFNSRNYPTKVTRGALKRS. The chain crosses the membrane as a helical span at residues 353–373; the sequence is LTYSFGSISLGSLFIAIINLI. At 374 to 389 the chain is on the extracellular side; that stretch reads RQLAQAAQQNAAQEGD. A helical transmembrane segment spans residues 390–410; the sequence is ILGTILWCIFGCLIGILDWLV. At 411–451 the chain is on the cytoplasmic side; it reads EFINRYAFCHIALYGKAYFAAAKDTWKMVKDRGIDALINEC. A helical transmembrane segment spans residues 452-472; sequence LIGPVLTFGATFVAYACGLIA. The Extracellular segment spans residues 473 to 487; it reads YLYMVYTKPAYNDGG. Residues 488-508 traverse the membrane as a helical segment; it reads GFTPVVVAFAFLIGLQVCNVF. Residues 509-554 are Cytoplasmic-facing; it reads TTPLTSGIDTIFVAMAWDPEVLMRDHPDLYHRMVQVYPHVQEAIHA.

Belongs to the CTL (choline transporter-like) family.

It localises to the cell membrane. In terms of biological role, probably involved in transport through the plasma membrane. This Neurospora crassa (strain ATCC 24698 / 74-OR23-1A / CBS 708.71 / DSM 1257 / FGSC 987) protein is Protein PNS1 (pns-1).